The chain runs to 119 residues: UPF0102 protein Sare_1228 (119 aa).

It belongs to the UPF0102 family.

This Salinispora arenicola (strain CNS-205) protein is UPF0102 protein Sare_1228.